Consider the following 433-residue polypeptide: LanC-like protein GCL1 (433 aa).

Positions 1–22 (MSSSVDFVTEQGRCGDDGNGAG) are disordered.

It belongs to the LanC-like protein family.

May play a role in signaling. May be not involved in abscisic acid (ABA) signaling. In Arabidopsis thaliana (Mouse-ear cress), this protein is LanC-like protein GCL1 (GCL1).